Here is a 316-residue protein sequence, read N- to C-terminus: Pantothenate kinase (316 aa).

95–102 (GSVAVGKS) contributes to the ATP binding site.

The protein belongs to the prokaryotic pantothenate kinase family.

It localises to the cytoplasm. It carries out the reaction (R)-pantothenate + ATP = (R)-4'-phosphopantothenate + ADP + H(+). Its pathway is cofactor biosynthesis; coenzyme A biosynthesis; CoA from (R)-pantothenate: step 1/5. The protein is Pantothenate kinase of Pectobacterium carotovorum subsp. carotovorum (strain PC1).